A 212-amino-acid chain; its full sequence is Thymidylate kinase (212 aa).

An ATP-binding site is contributed by 10-17 (GPDGAGKS).

The protein belongs to the thymidylate kinase family.

The catalysed reaction is dTMP + ATP = dTDP + ADP. In terms of biological role, phosphorylation of dTMP to form dTDP in both de novo and salvage pathways of dTTP synthesis. The protein is Thymidylate kinase of Lactobacillus helveticus (strain DPC 4571).